The primary structure comprises 496 residues: Probable cytosol aminopeptidase (496 aa).

Mn(2+)-binding residues include K266 and D271. K278 is a catalytic residue. 3 residues coordinate Mn(2+): D289, D348, and E350. Residue R352 is part of the active site.

It belongs to the peptidase M17 family. It depends on Mn(2+) as a cofactor.

The protein localises to the cytoplasm. It catalyses the reaction Release of an N-terminal amino acid, Xaa-|-Yaa-, in which Xaa is preferably Leu, but may be other amino acids including Pro although not Arg or Lys, and Yaa may be Pro. Amino acid amides and methyl esters are also readily hydrolyzed, but rates on arylamides are exceedingly low.. It carries out the reaction Release of an N-terminal amino acid, preferentially leucine, but not glutamic or aspartic acids.. Presumably involved in the processing and regular turnover of intracellular proteins. Catalyzes the removal of unsubstituted N-terminal amino acids from various peptides. This is Probable cytosol aminopeptidase from Azotobacter vinelandii (strain DJ / ATCC BAA-1303).